We begin with the raw amino-acid sequence, 637 residues long: Biosynthetic arginine decarboxylase (637 aa).

An N6-(pyridoxal phosphate)lysine modification is found at K101. Residue 286-296 (FDVGGGLAVDY) coordinates substrate.

Belongs to the Orn/Lys/Arg decarboxylase class-II family. SpeA subfamily. Requires Mg(2+) as cofactor. Pyridoxal 5'-phosphate serves as cofactor.

It catalyses the reaction L-arginine + H(+) = agmatine + CO2. Its pathway is amine and polyamine biosynthesis; agmatine biosynthesis; agmatine from L-arginine: step 1/1. Functionally, catalyzes the biosynthesis of agmatine from arginine. The chain is Biosynthetic arginine decarboxylase from Shewanella sp. (strain ANA-3).